A 252-amino-acid chain; its full sequence is MTVRAALVFLLAVGLTGCVTSGDQNPLKTDKGRDEARDAYIQLGLGYLQRGNTEQAKVPLRKALEIDPSSADAHAALAVVFQTEMEPKLADEEYRKALASDSRNARVLNNYGGFLYEQKRYEEAYQRLLEASQDTLYPERSRVFENLGLVSLQMKKPAQAKEYFEKSLRLNRNQPSVALEMADLLYKEREYVPARQYYDLFAQGGGQNARSLLLGIRLAKVFEDRDTAASYGLQLKRLYPGSLEYQEFQAEK.

A signal peptide spans 1–17 (MTVRAALVFLLAVGLTG). The N-palmitoyl cysteine moiety is linked to residue C18. C18 carries the S-diacylglycerol cysteine lipid modification. TPR repeat units lie at residues 32 to 67 (GRDE…LEID), 84 to 101 (EMEP…LASD), 104 to 133 (NARV…EASQ), 139 to 171 (ERSR…LRLN), 174 to 203 (QPSV…LFAQ), and 208 to 235 (NARS…GLQL).

As to quaternary structure, interacts with PilQ; this interaction is essential for assemby of PilQ into secretins.

The protein resides in the cell outer membrane. In terms of biological role, essential component of the type IV pilus (T4P) that plays a role in surface and host cell adhesion, colonization, biofilm maturation, virulence, and twitching, a form of surface-associated motility facilitated by cycles of extension, adhesion, and retraction of T4P fibers. Plays an essential role in the outer membrane localization and assembly of PilQ into secretins which are dodecamers of PilQ. The polypeptide is Type IV pilus assembly protein PilF (pilF) (Pseudomonas aeruginosa (strain ATCC 15692 / DSM 22644 / CIP 104116 / JCM 14847 / LMG 12228 / 1C / PRS 101 / PAO1)).